A 338-amino-acid polypeptide reads, in one-letter code: Glyceraldehyde-3-phosphate dehydrogenase (338 aa).

Residues 11–12 and G111 each bind NAD(+); that span reads TI. Residue 140 to 142 participates in D-glyceraldehyde 3-phosphate binding; it reads SCN. C141 acts as the Nucleophile in catalysis. Residue R169 coordinates NAD(+). D-glyceraldehyde 3-phosphate is bound at residue 195–196; the sequence is HG. An NAD(+)-binding site is contributed by Q302.

Belongs to the glyceraldehyde-3-phosphate dehydrogenase family. As to quaternary structure, homotetramer.

The protein resides in the cytoplasm. The catalysed reaction is D-glyceraldehyde 3-phosphate + phosphate + NADP(+) = (2R)-3-phospho-glyceroyl phosphate + NADPH + H(+). It catalyses the reaction D-glyceraldehyde 3-phosphate + phosphate + NAD(+) = (2R)-3-phospho-glyceroyl phosphate + NADH + H(+). It participates in carbohydrate degradation; glycolysis; pyruvate from D-glyceraldehyde 3-phosphate: step 1/5. The polypeptide is Glyceraldehyde-3-phosphate dehydrogenase (gap) (Methanobacterium formicicum).